The sequence spans 180 residues: MMNVNVLRLDHRIGRDTRITTHVCLTSRAFGASKIYLSGEEDHKLMENVRDTADRWGGNFEIEYAKNYMGVINKWKDNGGKVVHLTMYGSQAHEIVSEVQKSSADILIVVGGAKVPGKVYKSADWNVSVTTQPHSEVSSLAVFQHLLMDGKEFDLEFENPVFEVIPTAHGKNVNIHDENR.

L85 is a binding site for S-adenosyl-L-methionine.

Belongs to the aTrm56 family. In terms of assembly, homodimer.

The protein localises to the cytoplasm. The catalysed reaction is cytidine(56) in tRNA + S-adenosyl-L-methionine = 2'-O-methylcytidine(56) in tRNA + S-adenosyl-L-homocysteine + H(+). Functionally, specifically catalyzes the AdoMet-dependent 2'-O-ribose methylation of cytidine at position 56 in tRNAs. The sequence is that of tRNA (cytidine(56)-2'-O)-methyltransferase from Methanobrevibacter smithii (strain ATCC 35061 / DSM 861 / OCM 144 / PS).